The following is a 161-amino-acid chain: Serine-protein kinase RsbW (161 aa).

It belongs to the anti-sigma-factor family.

It carries out the reaction L-seryl-[protein] + ATP = O-phospho-L-seryl-[protein] + ADP + H(+). It catalyses the reaction L-threonyl-[protein] + ATP = O-phospho-L-threonyl-[protein] + ADP + H(+). Its function is as follows. Negative regulator of sigma-B activity. Phosphorylates and inactivates its specific antagonist protein, RsbV. Upon phosphorylation of RsbV, RsbW is released and binds to sigma-B, thereby blocking its ability to form an RNA polymerase holoenzyme (E-sigma-B). This is Serine-protein kinase RsbW from Bacillus licheniformis (strain ATCC 14580 / DSM 13 / JCM 2505 / CCUG 7422 / NBRC 12200 / NCIMB 9375 / NCTC 10341 / NRRL NRS-1264 / Gibson 46).